Here is a 142-residue protein sequence, read N- to C-terminus: Acetyltransferase SG1711 (142 aa).

The N-acetyltransferase domain maps to 1–142; the sequence is MEIRVFRHDD…GKRLIEDQEY (142 aa).

It belongs to the acetyltransferase family. YpeA subfamily.

This chain is Acetyltransferase SG1711, found in Sodalis glossinidius (strain morsitans).